Here is a 224-residue protein sequence, read N- to C-terminus: Casparian strip membrane protein 3 (224 aa).

The interval 1–30 (MESKKEGVASAPTSPESRRTRSNGKGKTIA) is disordered. Residues 1–57 (MESKKEGVASAPTSPESRRTRSNGKGKTIAEATPPSVTVVSTKVTPSPRGGWRKGAA) lie on the Cytoplasmic side of the membrane. The helical transmembrane segment at 58–78 (ILDFILRLGAISSAIGAAAVM) threads the bilayer. The Extracellular segment spans residues 79-105 (GNNEQILPFFTQFFQFHVQWDDFPMFQ). Residues 106–126 (FFVFANGAAVVFLILSLPFSI) traverse the membrane as a helical segment. Topologically, residues 127–138 (VCIVRPFAVGPR) are cytoplasmic. The chain crosses the membrane as a helical span at residues 139 to 159 (LLLVIVDIFAMALVIAAASAA). Residues 160-191 (AAVVYLAHNGSQDANWIAICQQYTDFCQVTSQ) are Extracellular-facing. N-linked (GlcNAc...) asparagine glycosylation is present at N168. The helical transmembrane segment at 192–212 (AVVASFVAAVFLICLIVLSSV) threads the bilayer. Residues 213 to 224 (ALKKGLKREFGW) lie on the Cytoplasmic side of the membrane.

Belongs to the Casparian strip membrane proteins (CASP) family. As to quaternary structure, homodimer and heterodimers.

It localises to the cell membrane. Functionally, regulates membrane-cell wall junctions and localized cell wall deposition. Required for establishment of the Casparian strip membrane domain (CSD) and the subsequent formation of Casparian strips, a cell wall modification of the root endodermis that determines an apoplastic barrier between the intraorganismal apoplasm and the extraorganismal apoplasm and prevents lateral diffusion. This Vigna unguiculata (Cowpea) protein is Casparian strip membrane protein 3.